Here is a 31-residue protein sequence, read N- to C-terminus: Palustrin-2a (31 aa).

A disulfide bond links Cys-23 and Cys-29.

In terms of tissue distribution, expressed by the skin glands.

It is found in the secreted. Antimicrobial activity against Gram-negative bacterium E.coli. This chain is Palustrin-2a, found in Lithobates palustris (Pickerel frog).